A 2873-amino-acid polypeptide reads, in one-letter code: WD repeat-containing protein 87 (2873 aa).

WD repeat units follow at residues 108-146 (PCRF…TGLQ), 199-239 (TSSG…PLHS), 242-283 (AHQS…RRLE), 368-407 (SILD…CPAK), 415-460 (NSQD…RLEK), 516-553 (LSSC…SSGS), and 565-604 (LHLC…IGIL). 5 disordered regions span residues 1049–1124 (FSLD…ESGT), 1177–1199 (DKRD…GKEA), 1392–1413 (EKKT…ERKV), 1531–1607 (SKSK…QEER), and 2199–2338 (KRKE…EEVD). Basic residues-rich tracts occupy residues 1089–1101 (VKKH…RGLK) and 1187–1197 (KLKKKHKKKGK). The segment covering 1549 to 1574 (EVSREGEEKEQQVTEEQRHIQEEHKW) has biased composition (basic and acidic residues). Residues 1575–1586 (ARIHRKRARAEK) are compositionally biased toward basic residues. Composition is skewed to basic and acidic residues over residues 1587 to 1607 (KRAQ…QEER) and 2204 to 2213 (KRGDKPKEKF). The segment covering 2244 to 2276 (SSEEEEEREEEEEREEEEEREEEEERKEEEEGE) has biased composition (acidic residues). Over residues 2277 to 2287 (EKQVEKEEEEK) the composition is skewed to basic and acidic residues. Residues 2304–2337 (EVFEEKEEIMSEEETESLSDEEEEEESCSLEEEV) are compositionally biased toward acidic residues.

The protein is WD repeat-containing protein 87 (WDR87) of Homo sapiens (Human).